A 1189-amino-acid polypeptide reads, in one-letter code: Pesticidal crystal protein Cry1Ca (1189 aa).

Belongs to the delta endotoxin family.

Functionally, promotes colloidosmotic lysis by binding to the midgut epithelial cells of many lepidopteran larvae including Spodoptera species. This chain is Pesticidal crystal protein Cry1Ca (cry1Ca), found in Bacillus thuringiensis subsp. aizawai.